Here is a 303-residue protein sequence, read N- to C-terminus: UPF0282 protein MM_2966 (303 aa).

It belongs to the UPF0282 family.

The sequence is that of UPF0282 protein MM_2966 from Methanosarcina mazei (strain ATCC BAA-159 / DSM 3647 / Goe1 / Go1 / JCM 11833 / OCM 88) (Methanosarcina frisia).